We begin with the raw amino-acid sequence, 345 residues long: MRLSDFDFALPEGLVAQAPVTPRDASRLMVLAPEEGSPAHRGFADLPELLAPGDLLVFNDTRVIPARLLGHKASGGKVELLLCEPLEGGLGRRWRAMGQASKPIREGAVLTFDGLEARVDDVEGEGFYRVTLDRQGPELEAALGRAGRIPLPPYIRRAPDAEDAARYQTIWARAPGSAAAPTAGLHFTEPLLARLAARGIRRTAVTLHVGPGTFLPIRGDDLDLHRMHGERYEVSPAAAAELAATRARGGRIVAVGTTSVRTLESAWRDGAVAAGPGRTELFIRPGHPFHAVDAMVTNFHLPRSTLLVLVCAFGGQGRVLAAYREAVARGYRFFSYGDAMLLLRR.

Belongs to the QueA family. In terms of assembly, monomer.

The protein resides in the cytoplasm. The enzyme catalyses 7-aminomethyl-7-carbaguanosine(34) in tRNA + S-adenosyl-L-methionine = epoxyqueuosine(34) in tRNA + adenine + L-methionine + 2 H(+). The protein operates within tRNA modification; tRNA-queuosine biosynthesis. Its function is as follows. Transfers and isomerizes the ribose moiety from AdoMet to the 7-aminomethyl group of 7-deazaguanine (preQ1-tRNA) to give epoxyqueuosine (oQ-tRNA). The protein is S-adenosylmethionine:tRNA ribosyltransferase-isomerase of Anaeromyxobacter dehalogenans (strain 2CP-1 / ATCC BAA-258).